A 196-amino-acid chain; its full sequence is Chaperone protein TorD (196 aa).

Belongs to the TorD/DmsD family. TorD subfamily.

It localises to the cytoplasm. In terms of biological role, involved in the biogenesis of TorA. Acts on TorA before the insertion of the molybdenum cofactor and, as a result, probably favors a conformation of the apoenzyme that is competent for acquiring the cofactor. The sequence is that of Chaperone protein TorD from Pasteurella multocida (strain Pm70).